A 384-amino-acid polypeptide reads, in one-letter code: uncharacterized protein (384 aa).

A disordered region spans residues 1 to 116 (MTEMPKKKFS…FPAAPPPMDS (116 aa)). Composition is skewed to basic and acidic residues over residues 14–70 (ARGD…RAGD) and 78–95 (RFKD…DRPR). Residues Gly-318, Ile-338, and Leu-347 each contribute to the S-adenosyl-L-methionine site.

This sequence belongs to the class IV-like SAM-binding methyltransferase superfamily. RNA methyltransferase TrmH family.

This is an uncharacterized protein from Synechocystis sp. (strain ATCC 27184 / PCC 6803 / Kazusa).